Reading from the N-terminus, the 573-residue chain is Urease subunit alpha (573 aa).

A Urease domain is found at glycine 136–phenylalanine 573. Residues histidine 141, histidine 143, and lysine 224 each coordinate Ni(2+). Lysine 224 is subject to N6-carboxylysine. Substrate is bound at residue histidine 226. 2 residues coordinate Ni(2+): histidine 253 and histidine 279. Histidine 327 functions as the Proton donor in the catalytic mechanism. Ni(2+) is bound at residue aspartate 367.

This sequence belongs to the metallo-dependent hydrolases superfamily. Urease alpha subunit family. Heterotrimer of UreA (gamma), UreB (beta) and UreC (alpha) subunits. Three heterotrimers associate to form the active enzyme. It depends on Ni cation as a cofactor. Post-translationally, carboxylation allows a single lysine to coordinate two nickel ions.

The protein resides in the cytoplasm. The enzyme catalyses urea + 2 H2O + H(+) = hydrogencarbonate + 2 NH4(+). It participates in nitrogen metabolism; urea degradation; CO(2) and NH(3) from urea (urease route): step 1/1. This Mycolicibacterium vanbaalenii (strain DSM 7251 / JCM 13017 / BCRC 16820 / KCTC 9966 / NRRL B-24157 / PYR-1) (Mycobacterium vanbaalenii) protein is Urease subunit alpha.